A 594-amino-acid polypeptide reads, in one-letter code: UvrABC system protein C (594 aa).

Positions 14 to 91 (DSPGCYLHKD…IQENMPKYNI (78 aa)) constitute a GIY-YIG domain. One can recognise a UVR domain in the interval 196 to 231 (DKIIDDLRSKMLEASNKQEFERAAEYRDLISGIATM).

This sequence belongs to the UvrC family. In terms of assembly, interacts with UvrB in an incision complex.

The protein localises to the cytoplasm. In terms of biological role, the UvrABC repair system catalyzes the recognition and processing of DNA lesions. UvrC both incises the 5' and 3' sides of the lesion. The N-terminal half is responsible for the 3' incision and the C-terminal half is responsible for the 5' incision. This Streptococcus equi subsp. zooepidemicus (strain MGCS10565) protein is UvrABC system protein C.